The following is a 541-amino-acid chain: Valine N-monooxygenase 2 (541 aa).

Over 1 to 18 the chain is Cytoplasmic; that stretch reads MAMNVSTTATTTASFAST. A helical transmembrane segment spans residues 19 to 41; the sequence is SSMNNTAKILLITLFISIVSTVI. At 42-541 the chain is on the lumenal side; it reads KLQKRASYKK…LAPHLYPTSP (500 aa). A glycan (N-linked (GlcNAc...) asparagine) is linked at Asn277. Cys477 contributes to the heme binding site. The N-linked (GlcNAc...) asparagine glycan is linked to Asn505.

This sequence belongs to the cytochrome P450 family. Heme is required as a cofactor. As to expression, expressed in the epidermis, the next two cortex cell layers, the endodermis and the pericycle of leaf petioles. Strong expression around the laticifers among the phloem cells and in parenchymatic cells between the protoxylem and the metaxylem cells. In the leaves, preferentially expressed in the mesophyll cells adjacent to the epidermis.

The protein resides in the microsome membrane. The catalysed reaction is L-valine + 2 reduced [NADPH--hemoprotein reductase] + 2 O2 = (E)-2-methylpropanal oxime + 2 oxidized [NADPH--hemoprotein reductase] + CO2 + 3 H2O + 2 H(+). It carries out the reaction L-valine + reduced [NADPH--hemoprotein reductase] + O2 = N-hydroxy-L-valine + oxidized [NADPH--hemoprotein reductase] + H2O + 2 H(+). The enzyme catalyses N-hydroxy-L-valine + reduced [NADPH--hemoprotein reductase] + O2 = N,N-dihydroxy-L-valine + oxidized [NADPH--hemoprotein reductase] + H2O + H(+). It catalyses the reaction L-isoleucine + 2 reduced [NADPH--hemoprotein reductase] + 2 O2 = (1E,2S)-2-methylbutanal oxime + 2 oxidized [NADPH--hemoprotein reductase] + CO2 + 3 H2O + 2 H(+). The catalysed reaction is L-isoleucine + reduced [NADPH--hemoprotein reductase] + O2 = N-hydroxy-L-isoleucine + oxidized [NADPH--hemoprotein reductase] + H2O + 2 H(+). It carries out the reaction N-hydroxy-L-isoleucine + reduced [NADPH--hemoprotein reductase] + O2 = N,N-dihydroxy-L-isoleucine + oxidized [NADPH--hemoprotein reductase] + H2O + H(+). In terms of biological role, involved in the biosynthesis of the cyanogenic glucosides linamarin and lotaustralin. Can use L-valine or L-isoleucine as substrate. Catalyzes multi-step reactions starting with two successive N-hydroxylations using L-valine and L-isoleucine as substrates leading to the formation of N,N-dihydroxy-L-valine and N,N-dihydroxy-L-isoleucine, respectively; following spontaneous reactions lead to the production of (E)-2-methylpropanal oxime and (1E,2S)-2-methylbutanal oxime, respectively. The chain is Valine N-monooxygenase 2 from Manihot esculenta (Cassava).